A 379-amino-acid polypeptide reads, in one-letter code: Murein hydrolase activator NlpD (379 aa).

Positions 1-25 are cleaved as a signal peptide; sequence MSAGSPKFTVRRIAALSLVSLWLAG. Residue cysteine 26 is the site of N-palmitoyl cysteine attachment. Residue cysteine 26 is the site of S-diacylglycerol cysteine attachment. Polar residues predominate over residues 30-51; that stretch reads SNPPAPVSSVNGNAPANTNSGM. The disordered stretch occupies residues 30–67; that stretch reads SNPPAPVSSVNGNAPANTNSGMLITPPPKMGTTSTAQQ. The stretch at 66-73 is one 1-1 repeat; it reads QQPQIQPV. Residues 66–97 form a 4 X 8 AA tandem repeats of Q-Q-P-Q-I-Q-P-V region; sequence QQPQIQPVQQPQIQATQQPQIQPVQPVAQQPV. The stretch at 74–81 is one 1-2; approximate repeat; it reads QQPQIQAT. The stretch at 82–89 is one 1-3 repeat; it reads QQPQIQPV. A 1-4; approximate repeat occupies 90 to 97; sequence QPVAQQPV. Positions 121-165 constitute a LysM domain; sequence STYTVKKGDTLFYIAWITGNDFRDLAQRNNIQAPYALNVGQTLQV. 4 consecutive repeat copies span residues 205 to 211, 227 to 233, 239 to 245, and 246 to 252. Residues 205 to 252 are 4 X 7 AA approximate repeats; that stretch reads PTITYSESSGEQSANKMLPNNKPTATTVTAPVTVPTASTTEPTVSSTS. Over residues 210-219 the composition is skewed to polar residues; the sequence is SESSGEQSAN. Disordered regions lie at residues 210–231 and 240–259; these read SESSGEQSANKMLPNNKPTATT and TASTTEPTVSSTSTSTPIST.

The protein belongs to the E.coli NlpD/Haemophilus LppB family.

It is found in the cell inner membrane. Its function is as follows. Activator of the cell wall hydrolase AmiC. Required for septal murein cleavage and daughter cell separation during cell division. This Escherichia coli (strain K12) protein is Murein hydrolase activator NlpD (nlpD).